The chain runs to 311 residues: Putative S-adenosyl-L-methionine-dependent methyltransferase MUL_4761 (311 aa).

Residues D132 and 161-162 (DL) each bind S-adenosyl-L-methionine.

The protein belongs to the UPF0677 family.

Its function is as follows. Exhibits S-adenosyl-L-methionine-dependent methyltransferase activity. The polypeptide is Putative S-adenosyl-L-methionine-dependent methyltransferase MUL_4761 (Mycobacterium ulcerans (strain Agy99)).